Here is a 267-residue protein sequence, read N- to C-terminus: Small ribosomal subunit protein uS2 (267 aa).

Residues 237–267 (IGESAAAPSEPALETASAEATAEGEQPGSQA) are disordered. The span at 238–261 (GESAAAPSEPALETASAEATAEGE) shows a compositional bias: low complexity.

The protein belongs to the universal ribosomal protein uS2 family.

The polypeptide is Small ribosomal subunit protein uS2 (Chelativorans sp. (strain BNC1)).